A 443-amino-acid chain; its full sequence is Exodeoxyribonuclease 7 large subunit (443 aa).

It belongs to the XseA family. As to quaternary structure, heterooligomer composed of large and small subunits.

The protein localises to the cytoplasm. It carries out the reaction Exonucleolytic cleavage in either 5'- to 3'- or 3'- to 5'-direction to yield nucleoside 5'-phosphates.. In terms of biological role, bidirectionally degrades single-stranded DNA into large acid-insoluble oligonucleotides, which are then degraded further into small acid-soluble oligonucleotides. The chain is Exodeoxyribonuclease 7 large subunit from Vibrio parahaemolyticus serotype O3:K6 (strain RIMD 2210633).